The primary structure comprises 338 residues: Mitoferrin-1 (338 aa).

Positions 1 to 37 are disordered; sequence MELRRGGVGSQAAGRRMDGDCRDGGCGSKDAGSEDYE. Solcar repeat units lie at residues 43–131, 141–225, and 232–326; these read ASVS…MKRT, NSHL…LQEQ, and YNPQ…FKYF. Helical transmembrane passes span 45–64, 106–125, 143–162, 200–219, 234–253, and 301–320; these read VSTHMTAGAMAGILEHSIMY, GLNVMMMGAGPAHAMYFACY, HLANGIAGSMATLLHDAVMN, SYTTQLTMNIPFQSIHFITY, PQSHIISGGLAGALAAAATT, and GIQARVIYQMPSTAISWSVY.

The protein belongs to the mitochondrial carrier (TC 2.A.29) family. In terms of assembly, interacts with ACB10; this interaction stabilizes SLC25A37 and enhances the function of SLC25A37 to import mitochondrial iron during erythroid differentiation.

The protein resides in the mitochondrion inner membrane. The enzyme catalyses Fe(2+)(in) = Fe(2+)(out). Its function is as follows. Mitochondrial iron transporter that specifically mediates iron uptake in developing erythroid cells, thereby playing an essential role in heme biosynthesis. This chain is Mitoferrin-1 (Slc25a37), found in Rattus norvegicus (Rat).